Consider the following 290-residue polypeptide: Type II restriction enzyme MjaIII (290 aa).

This sequence belongs to the DpnII type II restriction endonuclease family.

It catalyses the reaction Endonucleolytic cleavage of DNA to give specific double-stranded fragments with terminal 5'-phosphates.. Its function is as follows. A P subtype restriction enzyme that recognizes the double-stranded sequence 5'-GATC-3'; the cleavage site is unknown. The protein is Type II restriction enzyme MjaIII (mjaIIIR) of Methanocaldococcus jannaschii (strain ATCC 43067 / DSM 2661 / JAL-1 / JCM 10045 / NBRC 100440) (Methanococcus jannaschii).